Here is a 194-residue protein sequence, read N- to C-terminus: Glycerol-3-phosphate acyltransferase (194 aa).

5 helical membrane passes run 4-24 (EIVLIIGAYLLGSIPTGLLLA), 78-98 (EIWVAATGLAAFLGHVYTVFL), 110-130 (LGVFIGISPLSVLAALAIFVF), 137-157 (YVSLASITAAAAIPFLVALIE), and 161-181 (LLITMSVIIAALVVFKHRENI).

This sequence belongs to the PlsY family. In terms of assembly, probably interacts with PlsX.

It is found in the cell inner membrane. The enzyme catalyses an acyl phosphate + sn-glycerol 3-phosphate = a 1-acyl-sn-glycero-3-phosphate + phosphate. It participates in lipid metabolism; phospholipid metabolism. Its function is as follows. Catalyzes the transfer of an acyl group from acyl-phosphate (acyl-PO(4)) to glycerol-3-phosphate (G3P) to form lysophosphatidic acid (LPA). This enzyme utilizes acyl-phosphate as fatty acyl donor, but not acyl-CoA or acyl-ACP. In Geotalea daltonii (strain DSM 22248 / JCM 15807 / FRC-32) (Geobacter daltonii), this protein is Glycerol-3-phosphate acyltransferase.